The following is a 553-amino-acid chain: Glucagon-like peptide 2 receptor (553 aa).

The Extracellular portion of the chain corresponds to Met1–Ala173. 3 cysteine pairs are disulfide-bonded: Cys83–Cys105, Cys96–Cys137, and Cys118–Cys159. 4 N-linked (GlcNAc...) asparagine glycosylation sites follow: Asn97, Asn113, Asn148, and Asn162. A helical transmembrane segment spans residues Leu174–Thr198. The Cytoplasmic portion of the chain corresponds to Leu199 to Arg210. Residues Asn211 to Phe235 form a helical membrane-spanning segment. Residues Tyr236–Arg261 are Extracellular-facing. Residues Ser262–Leu285 form a helical membrane-spanning segment. Topologically, residues His286–Leu299 are cytoplasmic. The helical transmembrane segment at Trp300–Ala321 threads the bilayer. Topologically, residues Arg322–Ile339 are extracellular. A helical membrane pass occupies residues Trp340–Leu362. Residues Lys363 to Ser386 lie on the Cytoplasmic side of the membrane. Residues Thr387 to Thr405 form a helical membrane-spanning segment. Residues Asp406 to Arg417 lie on the Extracellular side of the membrane. Residues Leu418–Phe438 traverse the membrane as a helical segment. The Cytoplasmic segment spans residues Ala439–Glu550.

Belongs to the G-protein coupled receptor 2 family.

It localises to the cell membrane. This is a receptor for glucagon-like peptide 2. The activity of this receptor is mediated by G proteins which activate adenylyl cyclase. The protein is Glucagon-like peptide 2 receptor (GLP2R) of Homo sapiens (Human).